A 365-amino-acid chain; its full sequence is Probable galacturonosyltransferase-like 10 (365 aa).

The Cytoplasmic portion of the chain corresponds to 1–10 (MMSGSRLASR). A helical; Signal-anchor for type II membrane protein membrane pass occupies residues 11-31 (LIIIFSIISTSFFTVESIRLF). Residues 32 to 365 (PDSFDDASSD…LQYNQELEIL (334 aa)) are Lumenal-facing. Residue Asn-209 is glycosylated (N-linked (GlcNAc...) asparagine).

This sequence belongs to the glycosyltransferase 8 family.

It is found in the golgi apparatus membrane. The protein operates within glycan metabolism; pectin biosynthesis. In terms of biological role, may be involved in pectin and/or xylans biosynthesis in cell walls. In Arabidopsis thaliana (Mouse-ear cress), this protein is Probable galacturonosyltransferase-like 10 (GATL10).